The sequence spans 239 residues: Probable transcriptional regulatory protein ABO_1803 (239 aa).

It belongs to the TACO1 family.

It localises to the cytoplasm. This Alcanivorax borkumensis (strain ATCC 700651 / DSM 11573 / NCIMB 13689 / SK2) protein is Probable transcriptional regulatory protein ABO_1803.